A 301-amino-acid polypeptide reads, in one-letter code: Oxygen-dependent coproporphyrinogen-III oxidase (301 aa).

An important for dimerization region spans residues 49-58 (VMVDGAVIEK). Serine 93 lines the substrate pocket. Catalysis depends on histidine 107, which acts as the Proton donor. Residues 109 to 111 (NVR) and 259 to 261 (GGR) each bind substrate. Positions 241–276 (YAEFNLVIDRGTKFGLQSGGRTESILISLPPRARWG) are important for dimerization.

This sequence belongs to the aerobic coproporphyrinogen-III oxidase family. Homodimer.

It localises to the cytoplasm. It catalyses the reaction coproporphyrinogen III + O2 + 2 H(+) = protoporphyrinogen IX + 2 CO2 + 2 H2O. Its pathway is porphyrin-containing compound metabolism; protoporphyrin-IX biosynthesis; protoporphyrinogen-IX from coproporphyrinogen-III (O2 route): step 1/1. Involved in the heme biosynthesis. Catalyzes the aerobic oxidative decarboxylation of propionate groups of rings A and B of coproporphyrinogen-III to yield the vinyl groups in protoporphyrinogen-IX. This chain is Oxygen-dependent coproporphyrinogen-III oxidase, found in Leishmania major.